Consider the following 299-residue polypeptide: Heterodisulfide reductase subunit B-like protein (299 aa).

Belongs to the HdrB family. In terms of assembly, the heterodisulfide reductase is composed of three subunits; HdlA, HdlB and HdlC. It forms a complex with the F420-non-reducing hydrogenase (Mvh), which provides the reducing equivalents to the heterodisulfide reductase.

It localises to the cytoplasm. Functionally, has oxidoreductase activity. The Hdl and Mvh subunits may together mediate electron transfer from hydrogen to an unidentified electron acceptor on the cytoplasmic side of the membrane. This chain is Heterodisulfide reductase subunit B-like protein (hdlB), found in Archaeoglobus profundus (strain DSM 5631 / JCM 9629 / NBRC 100127 / Av18).